Reading from the N-terminus, the 203-residue chain is MAEGPLEAPFWRKGLLVAGLDEAGRGAWAGPIVVGVVVLPPGEYPFRDSKLLSPRARERLAEKVKEVALAFALGVAEAAEVDRLGVLKATLLAAERALLSLPLAPEALVTDYLPLPTPLPLLSPPKADEKSPTVAAASILAKVHRDRIMAELDRLYPGYGFARHKGYGTPEHQEALLALGPSPVHRKRFAPVAQAPLRFPEAP.

Residues Leu15–Glu201 form the RNase H type-2 domain. 3 residues coordinate a divalent metal cation: Asp21, Glu22, and Asp111.

This sequence belongs to the RNase HII family. It depends on Mn(2+) as a cofactor. Mg(2+) is required as a cofactor.

Its subcellular location is the cytoplasm. It carries out the reaction Endonucleolytic cleavage to 5'-phosphomonoester.. In terms of biological role, endonuclease that specifically degrades the RNA of RNA-DNA hybrids. The protein is Ribonuclease HII of Thermus thermophilus (strain ATCC BAA-163 / DSM 7039 / HB27).